The sequence spans 89 residues: DNA-directed RNA polymerase subunit omega (89 aa).

It belongs to the RNA polymerase subunit omega family. In terms of assembly, the RNAP catalytic core consists of 2 alpha, 1 beta, 1 beta' and 1 omega subunit. When a sigma factor is associated with the core the holoenzyme is formed, which can initiate transcription.

It carries out the reaction RNA(n) + a ribonucleoside 5'-triphosphate = RNA(n+1) + diphosphate. Functionally, promotes RNA polymerase assembly. Latches the N- and C-terminal regions of the beta' subunit thereby facilitating its interaction with the beta and alpha subunits. This Idiomarina loihiensis (strain ATCC BAA-735 / DSM 15497 / L2-TR) protein is DNA-directed RNA polymerase subunit omega.